Reading from the N-terminus, the 114-residue chain is NLP effector protein 1 (114 aa).

This sequence belongs to the Necrosis inducing protein (NPP1) family.

The protein resides in the secreted. It localises to the host cytoplasm. Functionally, probable secreted effector that may act as a pathogen-associated molecular pattern (PAMP) recognized by the plant immune system. Seems not to induce necrosis, neither in several susceptible or resistant Vitis species nor in the dicot model plant Nicotiana benthamiana. The sequence is that of NLP effector protein 1 from Plasmopara viticola (Downy mildew of grapevine).